A 380-amino-acid polypeptide reads, in one-letter code: Chaperone protein DnaJ (380 aa).

A disordered region spans residues 1 to 48 (MAKKDYYDTLGVPKNASDDDIKKAYRKLAMKHHPDRNQGDKSKVSEEK). One can recognise a J domain in the interval 5–72 (DYYDTLGVPK…NKRMAYDQYG (68 aa)). Basic residues predominate over residues 24-34 (AYRKLAMKHHP). Positions 35-48 (DRNQGDKSKVSEEK) are enriched in basic and acidic residues. The CR-type zinc finger occupies 139–217 (GKEAQIRIPS…CHGVGKTKNN (79 aa)). Zn(2+)-binding residues include C152, C155, C169, C172, C191, C194, C205, and C208. 4 CXXCXGXG motif repeats span residues 152 to 159 (CNTCHGSG), 169 to 176 (CTTCHGHG), 191 to 198 (CPQCKGTG), and 205 to 212 (CVACHGVG). A disordered region spans residues 357–380 (KKGGARHSPSEEGWADKLKSFFSA). Over residues 364-380 (SPSEEGWADKLKSFFSA) the composition is skewed to basic and acidic residues.

The protein belongs to the DnaJ family. As to quaternary structure, homodimer. Zn(2+) serves as cofactor.

It localises to the cytoplasm. Functionally, participates actively in the response to hyperosmotic and heat shock by preventing the aggregation of stress-denatured proteins and by disaggregating proteins, also in an autonomous, DnaK-independent fashion. Unfolded proteins bind initially to DnaJ; upon interaction with the DnaJ-bound protein, DnaK hydrolyzes its bound ATP, resulting in the formation of a stable complex. GrpE releases ADP from DnaK; ATP binding to DnaK triggers the release of the substrate protein, thus completing the reaction cycle. Several rounds of ATP-dependent interactions between DnaJ, DnaK and GrpE are required for fully efficient folding. Also involved, together with DnaK and GrpE, in the DNA replication of plasmids through activation of initiation proteins. In Polaromonas sp. (strain JS666 / ATCC BAA-500), this protein is Chaperone protein DnaJ.